Consider the following 137-residue polypeptide: Nucleoside diphosphate kinase (137 aa).

Residues lysine 9, phenylalanine 58, arginine 86, threonine 92, arginine 103, and asparagine 113 each contribute to the ATP site. The active-site Pros-phosphohistidine intermediate is the histidine 121.

It belongs to the NDK family. In terms of assembly, homotetramer. Mg(2+) is required as a cofactor.

The protein localises to the cytoplasm. The enzyme catalyses a 2'-deoxyribonucleoside 5'-diphosphate + ATP = a 2'-deoxyribonucleoside 5'-triphosphate + ADP. It carries out the reaction a ribonucleoside 5'-diphosphate + ATP = a ribonucleoside 5'-triphosphate + ADP. Its function is as follows. Major role in the synthesis of nucleoside triphosphates other than ATP. The ATP gamma phosphate is transferred to the NDP beta phosphate via a ping-pong mechanism, using a phosphorylated active-site intermediate. The chain is Nucleoside diphosphate kinase from Streptococcus pneumoniae (strain Hungary19A-6).